A 73-amino-acid polypeptide reads, in one-letter code: Kappa-scoloptoxin SsmTx-I (73 aa).

A signal peptide spans 1–25 (MMMMFSVVSVFLMLLLLKFHDLSMG). A propeptide spanning residues 26–37 (EEISLLKKVVRR) is cleaved from the precursor. 2 cysteine pairs are disulfide-bonded: C45/C56 and C50/C63.

It belongs to the scoloptoxin-04 family. Expressed by the venom gland.

It is found in the secreted. Functionally, exhibits highly specific blockage of Kv2.1/KCNB1 (IC(50)=41.7 nM) voltage-gated potassium channels. This blockage is not associated with a significant change in steady-state activation, suggesting that this toxin acts as a channel blocker rather than a gating-modifier. Shows potential analgesic activities in formalin-induced paw licking, thermal pain, and acetic acid-induced abdominal writhing mice models. In Scolopendra mutilans (Chinese red-headed centipede), this protein is Kappa-scoloptoxin SsmTx-I.